A 190-amino-acid chain; its full sequence is Xanthine phosphoribosyltransferase (190 aa).

Xanthine contacts are provided by Leu-20 and Asn-27. 129-133 (ANGRA) is a binding site for 5-phospho-alpha-D-ribose 1-diphosphate. Lys-157 is a binding site for xanthine.

The protein belongs to the purine/pyrimidine phosphoribosyltransferase family. Xpt subfamily. As to quaternary structure, homodimer.

Its subcellular location is the cytoplasm. The enzyme catalyses XMP + diphosphate = xanthine + 5-phospho-alpha-D-ribose 1-diphosphate. Its pathway is purine metabolism; XMP biosynthesis via salvage pathway; XMP from xanthine: step 1/1. Functionally, converts the preformed base xanthine, a product of nucleic acid breakdown, to xanthosine 5'-monophosphate (XMP), so it can be reused for RNA or DNA synthesis. This is Xanthine phosphoribosyltransferase from Clostridioides difficile (strain 630) (Peptoclostridium difficile).